Reading from the N-terminus, the 261-residue chain is Ribosomal RNA small subunit methyltransferase J (261 aa).

S-adenosyl-L-methionine contacts are provided by residues 101–102 (RD), 117–118 (ER), 153–154 (SS), and Asp176.

Belongs to the methyltransferase superfamily. RsmJ family.

Its subcellular location is the cytoplasm. The enzyme catalyses guanosine(1516) in 16S rRNA + S-adenosyl-L-methionine = N(2)-methylguanosine(1516) in 16S rRNA + S-adenosyl-L-homocysteine + H(+). Specifically methylates the guanosine in position 1516 of 16S rRNA. This is Ribosomal RNA small subunit methyltransferase J from Vibrio cholerae serotype O1 (strain ATCC 39315 / El Tor Inaba N16961).